Here is a 397-residue protein sequence, read N- to C-terminus: uncharacterized protein (397 aa).

The next 4 helical transmembrane spans lie at 142–162, 191–211, 242–258, and 260–280; these read WETI…VGIA, SQLL…SVVL, ALTG…TYFL, and APWL…SAGF.

The protein belongs to the cation diffusion facilitator (CDF) transporter (TC 2.A.4) family. SLC30A subfamily.

Its subcellular location is the membrane. This is an uncharacterized protein from Schizosaccharomyces pombe (strain 972 / ATCC 24843) (Fission yeast).